Consider the following 375-residue polypeptide: Chlorophyll a/b light-harvesting protein PcbC (375 aa).

6 consecutive transmembrane segments (helical) span residues 40–60, 102–122, 151–171, 225–245, 262–282, and 300–320; these read LLGA…SITV, YFVI…GGLF, LSLI…AFVA, IIGG…WHIL, AILS…GFFV, and GAAA…VWHA. Residues 352-375 are disordered; that stretch reads ARTFIGRGKPQPEPPKKKGLFGRG.

It belongs to the PsbB/PsbC family. IsiA/Pcb subfamily. The antenna complex consists of chlorophylls (a and b) and chlorophyll a/b binding proteins. Chlorophyll a is required as a cofactor. Requires chlorophyll b as cofactor.

Its subcellular location is the cellular thylakoid membrane. Functionally, the antenna complex functions as a light receptor, it captures and delivers excitation energy to photosystems II and I. The Prochlorales pcb genes are not related to higher plant LHCs. This chain is Chlorophyll a/b light-harvesting protein PcbC (pcbC), found in Prochlorothrix hollandica.